An 89-amino-acid polypeptide reads, in one-letter code: Small ribosomal subunit protein bS18 (89 aa).

This sequence belongs to the bacterial ribosomal protein bS18 family. As to quaternary structure, part of the 30S ribosomal subunit. Forms a tight heterodimer with protein bS6.

In terms of biological role, binds as a heterodimer with protein bS6 to the central domain of the 16S rRNA, where it helps stabilize the platform of the 30S subunit. This Bdellovibrio bacteriovorus (strain ATCC 15356 / DSM 50701 / NCIMB 9529 / HD100) protein is Small ribosomal subunit protein bS18.